Consider the following 1516-residue polypeptide: Alpha-2-macroglobulin homolog (1516 aa).

Positions methionine 1–alanine 26 are cleaved as a signal peptide.

The protein belongs to the protease inhibitor I39 (alpha-2-macroglobulin) family. Bacterial alpha-2-macroglobulin subfamily.

This chain is Alpha-2-macroglobulin homolog, found in Pseudomonas aeruginosa (strain ATCC 15692 / DSM 22644 / CIP 104116 / JCM 14847 / LMG 12228 / 1C / PRS 101 / PAO1).